The following is a 2602-amino-acid chain: Filamin-B (2602 aa).

The tract at residues 1–239 is actin-binding; sequence MPVTEKDLAE…VMTYLSQFPK (239 aa). Calponin-homology (CH) domains lie at 16-122 and 139-242; these read KIQQ…LHYS and QTPK…KAKL. Thr216 carries the phosphothreonine modification. Residues 244-267 form a disordered region; sequence PGAPLKPKLNPKKARAYGRGIEPT. 15 Filamin repeats span residues 249–347, 349–446, 447–543, 544–636, 640–736, 737–839, 840–938, 939–1034, 1035–1127, 1128–1222, 1223–1322, 1323–1415, 1416–1511, 1512–1608, and 1609–1704; these read KPKL…EVNV, KAQG…GVQI, GEAC…EVQV, GPEA…MAFI, TGDY…RVNI, GQGS…RVKV, DPSH…TVGV, AAPL…TVEA, SLPP…KADI, EMPF…WVKV, EPAI…KVAV, TEGC…RVPS, KDVV…KVKV, LPTY…RIRA, and TQTG…TVMA. Thr519 bears the Phosphothreonine mark. N6-acetyllysine is present on Lys681. Ser730 bears the Phosphoserine mark. A compositionally biased stretch (basic and acidic residues) spans 837–850; sequence VKVDPSHDASKVKA. The tract at residues 837–862 is disordered; the sequence is VKVDPSHDASKVKAEGPGLSKAGVEN. Phosphoserine occurs at positions 886, 932, 983, and 1028. Phosphothreonine is present on Thr1307. Ser1316 is modified (phosphoserine). Phosphoserine is present on residues Ser1433, Ser1505, and Ser1602. Residues 1705–1728 form a hinge 1 region; sequence TDGEVTAMEEAPVNACPPGFRPWV. 8 Filamin repeats span residues 1729 to 1813, 1816 to 1908, 1919 to 1994, 1997 to 2089, 2091 to 2185, 2188 to 2280, 2282 to 2375, and 2379 to 2471; these read TEEA…SPLQ, VNYP…TAKI, KLGS…SIMV, SEIG…TVKI, GEGR…QFTV, LGEG…LVPV, APSD…KVRV, and GQAG…KAKV. At Lys1780 the chain carries N6-acetyllysine. Ser2083 and Ser2113 each carry phosphoserine. Residues Ser2369 and Ser2465 each carry the phosphoserine modification. Residue Lys2468 forms a Glycyl lysine isopeptide (Lys-Gly) (interchain with G-Cter in ISG15) linkage. The hinge 2 stretch occupies residues 2472–2506; it reads TGQRLVSPGSANETSSILVESVTRSSTETCYSAIP. The segment at 2472–2602 is self-association site, tail; that stretch reads TGQRLVSPGS…PGSPFHVTVP (131 aa). Ser2478, Ser2481, and Ser2492 each carry phosphoserine. The Filamin 24 repeat unit spans residues 2507-2601; that stretch reads KSSSDASKVT…IPGSPFHVTV (95 aa). Lys2518 and Lys2524 each carry N6-succinyllysine. Lys2576 is subject to N6-acetyllysine.

It belongs to the filamin family. As to quaternary structure, homodimer. Interacts with FLNA, FLNC, INPPL1, ITGB1A, ITGB1D, ITGB3, ITGB6, MYOT, MYOZ1, PSEN1 and PSEN2. Interacts with MICALL2. Interacts with RFLNA and RFLNB. Interacts with ASB2 isoform 1; the interaction targets FLNB for proteasomal degradation. Post-translationally, ISGylation prevents ability to interact with the upstream activators of the JNK cascade and inhibits IFNA-induced JNK signaling. Ubiquitination by a SCF-like complex containing ASB2 isoform 1 leads to proteasomal degradation which promotes muscle differentiation. In terms of tissue distribution, expressed in hippocampus, cortex, cerebellar Purkinje cells and granule cell layers.

It localises to the cytoplasm. Its subcellular location is the cell cortex. It is found in the cytoskeleton. The protein resides in the stress fiber. The protein localises to the myofibril. It localises to the sarcomere. Its subcellular location is the z line. Functionally, connects cell membrane constituents to the actin cytoskeleton. May promote orthogonal branching of actin filaments and links actin filaments to membrane glycoproteins. Anchors various transmembrane proteins to the actin cytoskeleton. The polypeptide is Filamin-B (Flnb) (Mus musculus (Mouse)).